Reading from the N-terminus, the 448-residue chain is Glucose-6-phosphate isomerase (448 aa).

The active-site Proton donor is the E291. Active-site residues include H312 and K425.

It belongs to the GPI family.

The protein resides in the cytoplasm. It catalyses the reaction alpha-D-glucose 6-phosphate = beta-D-fructose 6-phosphate. It functions in the pathway carbohydrate biosynthesis; gluconeogenesis. The protein operates within carbohydrate degradation; glycolysis; D-glyceraldehyde 3-phosphate and glycerone phosphate from D-glucose: step 2/4. Its function is as follows. Catalyzes the reversible isomerization of glucose-6-phosphate to fructose-6-phosphate. This is Glucose-6-phosphate isomerase from Symbiobacterium thermophilum (strain DSM 24528 / JCM 14929 / IAM 14863 / T).